The chain runs to 166 residues: Putative 4-hydroxy-4-methyl-2-oxoglutarate aldolase (166 aa).

Residues 74-77 and Arg96 contribute to the substrate site; that span reads GDQI. Residue Asp97 participates in a divalent metal cation binding.

This sequence belongs to the class II aldolase/RraA-like family. Homotrimer. The cofactor is a divalent metal cation.

It catalyses the reaction 4-hydroxy-4-methyl-2-oxoglutarate = 2 pyruvate. The enzyme catalyses oxaloacetate + H(+) = pyruvate + CO2. Functionally, catalyzes the aldol cleavage of 4-hydroxy-4-methyl-2-oxoglutarate (HMG) into 2 molecules of pyruvate. Also contains a secondary oxaloacetate (OAA) decarboxylase activity due to the common pyruvate enolate transition state formed following C-C bond cleavage in the retro-aldol and decarboxylation reactions. This is Putative 4-hydroxy-4-methyl-2-oxoglutarate aldolase from Xanthomonas campestris pv. campestris (strain B100).